Consider the following 446-residue polypeptide: Maturase K (446 aa).

This sequence belongs to the intron maturase 2 family. MatK subfamily.

Its subcellular location is the plastid. It localises to the chloroplast. In terms of biological role, usually encoded in the trnK tRNA gene intron. Probably assists in splicing its own and other chloroplast group II introns. The polypeptide is Maturase K (Phalaenopsis aphrodite subsp. formosana (Moth orchid)).